The following is a 1288-amino-acid chain: Peroxidasin homolog (1288 aa).

The first 16 residues, 1–16 (MNLLLYLLLLVPWVLG), serve as a signal peptide directing secretion. Positions 17–51 (SEDGCPAKCTCDKKGFTVDCSNAGLTRIPKGISSN) constitute an LRRNT domain. LRR repeat units follow at residues 27-49 (CDKKGFTVDCSNAGLTRIPKGIS), 50-72 (SNVRSLVLRNNRIHTLIKSDLEG), 73-96 (FPLLESLVLTHNKIKVVEENILDH), 97-120 (LPELKRLSLSHNLLVYIPPLASES), 122-143 (PLASLNLKRNHIQFIDERWLLQ), 145-168 (FPELVQIDLSHNRIQSLRTKLFEN), and 204-227 (AYCTNPVELRHQAIDEVEESLLKC). Positions 180 to 228 (NPWNCDCRVTKVKALLRKVEWERKAYCTNPVELRHQAIDEVEESLLKCA) constitute an LRRCT domain. An N-linked (GlcNAc...) asparagine glycan is attached at N247. The interval 304-323 (LRQSHHSNGAPQFTYKPRDN) is disordered. 2 consecutive Ig-like C2-type domains span residues 314 to 400 (PQFT…FSLD) and 407 to 494 (PNIY…AKLT). A disulfide bridge connects residues C335 and C384. LRR repeat units lie at residues 356-381 (SSRKKQLGLSNNVLRIYPFLEEDSGR) and 387-412 (VNSLGKVSHTFSLDLISSIPPNIYEG). C428 and C478 are oxidised to a cystine. Residue N594 is glycosylated (N-linked (GlcNAc...) asparagine). C624 and C640 form a disulfide bridge. D718 is a heme b binding site. The active-site Proton acceptor is H719. Ca(2+) is bound at residue D720. 2 disulfide bridges follow: C739–C749 and C743–C770. N740 carries N-linked (GlcNAc...) asparagine glycosylation. The Ca(2+) site is built by T802, F804, D806, and S808. Residue N857 is glycosylated (N-linked (GlcNAc...) asparagine). Residues E876 and H972 each contribute to the heme b site. LRR repeat units follow at residues 998–1022 (KAFFTPELVLTEGGIDPLLRGLFAS) and 1049–1073 (SLDLAVMNIQRSRDHGLPSYTEYRQ). Cystine bridges form between C1075–C1132 and C1173–C1200. An LRR 12 repeat occupies 1168–1189 (LARLLCDNGDEIDRIQKDVFMY).

It belongs to the peroxidase family. XPO subfamily. Ca(2+) serves as cofactor. Requires heme b as cofactor.

It is found in the secreted. The protein resides in the extracellular space. Its subcellular location is the extracellular matrix. It catalyses the reaction L-lysyl-[collagen] + L-methionyl-[collagen] + H2O2 = [collagen]-L-lysyl-N-S-L-methionyl-[collagen] + 2 H2O + H(+). The catalysed reaction is bromide + H2O2 = hypobromite + H2O. It carries out the reaction L-lysyl-[collagen] + L-methionyl-[collagen] + hypobromite = [collagen]-L-lysyl-N-S-L-methionyl-[collagen] + bromide + H2O + H(+). The enzyme catalyses L-tyrosyl-[protein] + bromide + H2O2 + H(+) = 3-bromo-L-tyrosyl-[protein] + 2 H2O. It catalyses the reaction hypobromite + L-tyrosyl-[protein] + H(+) = 3-bromo-L-tyrosyl-[protein] + H2O. Its function is as follows. Catalyzes the two-electron oxidation of bromide by hydrogen peroxide and generates hypobromite as a reactive intermediate which mediates the formation of sulfilimine cross-links between methionine and hydroxylysine residues within an uncross-linked collagen IV NC1 hexamer. Plays a role in the attachment of tissues and in axonal guidance during early developmental stages. May functionally antagonize the peroxidasin pxn-2 to maintain neuronal development. In Caenorhabditis briggsae, this protein is Peroxidasin homolog.